The following is an 889-amino-acid chain: Alanine--tRNA ligase (889 aa).

Residues histidine 587, histidine 591, cysteine 691, and histidine 695 each contribute to the Zn(2+) site. Disordered stretches follow at residues 734-760 (QQEQESKRKAEEAVAKEQLEKQREENK) and 866-889 (AQGGGKDTSKKDEAISKAKSMILG). The span at 872-881 (DTSKKDEAIS) shows a compositional bias: basic and acidic residues.

The protein belongs to the class-II aminoacyl-tRNA synthetase family. It depends on Zn(2+) as a cofactor.

The protein localises to the cytoplasm. It catalyses the reaction tRNA(Ala) + L-alanine + ATP = L-alanyl-tRNA(Ala) + AMP + diphosphate. In terms of biological role, catalyzes the attachment of alanine to tRNA(Ala) in a two-step reaction: alanine is first activated by ATP to form Ala-AMP and then transferred to the acceptor end of tRNA(Ala). Also edits incorrectly charged Ser-tRNA(Ala) and Gly-tRNA(Ala) via its editing domain. The polypeptide is Alanine--tRNA ligase (Nitrosopumilus maritimus (strain SCM1)).